The chain runs to 495 residues: MLQVLAPFYSNLSGLILLPLLGSLIILVIPNSRVRLIRGITIWTSLITFLYSLFFWIRFENDTAKFQFVETIRWLPYSNINFYIGIDGISLFFVILTTFLTPICILVGFYSVKSYKKEYMIAFFICESFLIAVFCSLDLLIFYVFFESVLIPMFIIIGVWGSRQRKIKAAYQFFLYTLMGSLFMLLAILFIFFQTGTTDLQILLTTEFSERRQILLWIAFFASFSVKVPMVPVHIWLPEAHVEAPTAGSVILAGILLKLGTYGFLRFSIPMFPEATLYFTPFIYTLSVIAIIYTSLTTIRQIDLKKIIAYSSVAHMNFVTIGMFSLNIQGIEGSILLMLSHGLVSSALFLCVGALYDRHKTRIVKYYGGLVSTMPIFSTIFLFFTLANMSLPGTSSFIGEFLILVGAFQRNSLVATLAALGMILGAAYSLWLYNRVVFGNFKPNFILKFSDLNRREVLIFLPFIVGVIWMGVYPEVFLECMHTSVSNLVQHGKFD.

The next 14 membrane-spanning stretches (helical) occupy residues 9–29 (YSNL…ILVI), 37–57 (IRGI…FFWI), 89–109 (ISLF…LVGF), 118–138 (EYMI…CSLD), 139–159 (LLIF…IIGV), 173–193 (FFLY…FIFF), 214–234 (ILLW…VPVH), 245–265 (PTAG…YGFL), 272–292 (FPEA…IAII), 307–327 (IIAY…FSLN), 335–355 (ILLM…VGAL), 367–387 (YGGL…FTLA), 413–433 (LVAT…LWLY), and 457–477 (VLIF…PEVF).

It belongs to the complex I subunit 4 family.

It localises to the mitochondrion membrane. The catalysed reaction is a ubiquinone + NADH + 5 H(+)(in) = a ubiquinol + NAD(+) + 4 H(+)(out). Core subunit of the mitochondrial membrane respiratory chain NADH dehydrogenase (Complex I) that is believed to belong to the minimal assembly required for catalysis. Complex I functions in the transfer of electrons from NADH to the respiratory chain. The immediate electron acceptor for the enzyme is believed to be ubiquinone. The chain is NADH-ubiquinone oxidoreductase chain 4 (ND4) from Marchantia polymorpha (Common liverwort).